The sequence spans 394 residues: Elongation factor Tu (394 aa).

A tr-type G domain is found at 10–204 (KPHVNIGTIG…AVDSYIPQPV (195 aa)). Positions 19 to 26 (GHVDHGKT) are G1. 19–26 (GHVDHGKT) is a GTP binding site. Threonine 26 lines the Mg(2+) pocket. The interval 60 to 64 (GITIS) is G2. The tract at residues 81 to 84 (DCPG) is G3. Residues 81–85 (DCPGH) and 136–139 (NKID) each bind GTP. The segment at 136–139 (NKID) is G4. Residues 174–176 (SAL) form a G5 region.

It belongs to the TRAFAC class translation factor GTPase superfamily. Classic translation factor GTPase family. EF-Tu/EF-1A subfamily. In terms of assembly, monomer.

Its subcellular location is the cytoplasm. It catalyses the reaction GTP + H2O = GDP + phosphate + H(+). In terms of biological role, GTP hydrolase that promotes the GTP-dependent binding of aminoacyl-tRNA to the A-site of ribosomes during protein biosynthesis. This chain is Elongation factor Tu, found in Rickettsia peacockii (strain Rustic).